Here is a 308-residue protein sequence, read N- to C-terminus: CAAX prenyl protease 2 (308 aa).

An N-acetylalanine modification is found at Ala2. 3 consecutive transmembrane segments (helical) span residues 25–45, 75–95, and 112–132; these read ALSSPGPGLCCWVSVFSCFSL, VLVVSSLSPLCVLLWRELTGI, and IFPAALLPLLLTMILFLGPLM. The active-site Proton donor/acceptor is the Glu175. The chain crosses the membrane as a helical span at residues 186–206; the sequence is MLAPCTGLGPAVFTCPLFFGV. The active-site Proton donor/acceptor is His208. 2 consecutive transmembrane segments (helical) span residues 233–253 and 262–282; these read LIGPVLCHSFCNYMGFPAVCA and PLLAGYALGVGLFLLLLQPLT.

It belongs to the peptidase U48 family. In terms of processing, ubiquitinated. Undergoes 'Lys-48'- and 'Lys-63'-linked ubiquitination. 'Lys-48' ubiquitination induces its degradation. Deubiquitinated by USP17L2/USP17 that cleaves 'Lys-63'-linked ubiquitin chains.

The protein resides in the endoplasmic reticulum membrane. It catalyses the reaction Hydrolyzes the peptide bond -P2-(S-farnesyl or geranylgeranyl)C-P1'-P2'-P3'-COOH where P1' and P2' are amino acids with aliphatic sidechains and P3' is any C-terminal residue.. With respect to regulation, deubiquitination by USP17L2/USP17 negatively regulates the proteolytic activity toward Ras GTPases. Protease involved in the processing of a variety of prenylated proteins containing the C-terminal CAAX motif, where C is a cysteine modified with an isoprenoid lipid, A is an aliphatic amino acid and X is any C-terminal amino acid. Proteolytically removes the C-terminal three residues of farnesylated and geranylated proteins, leaving the prenylated cysteine as the new C-terminus. Is able to process K-Ras, N-Ras, H-Ras, RAP1B and G-gamma-1. The polypeptide is CAAX prenyl protease 2 (Rce1) (Rattus norvegicus (Rat)).